An 823-amino-acid chain; its full sequence is Transcription factor SPT20 homolog-like 1 (823 aa).

Disordered stretches follow at residues 246–273, 369–524, 560–601, 631–669, and 720–757; these read SVKP…KEER, PRKK…AAQP, GSSF…AVQA, VLTG…LGLS, and LRQQ…PQHI. Residues 423-440 are compositionally biased toward polar residues; the sequence is SHSSSGPASVSQLSSWKT. 3 stretches are compositionally biased toward low complexity: residues 469–509, 568–582, and 636–650; these read SSSG…QKPS, APGS…ISGS, and QQQS…QLQQ.

Belongs to the SPT20 family.

This Homo sapiens (Human) protein is Transcription factor SPT20 homolog-like 1 (SUPT20HL1).